Consider the following 316-residue polypeptide: Arginase-1 (316 aa).

Residues 1-26 are disordered; sequence MAKERHSVGVIGAPFSKGQPRRGVEE. Residues H101, D124, H126, and D128 each contribute to the Mn(2+) site. Residues 126-130, 137-139, and D183 contribute to the substrate site; these read HADIN and CGN. Residues D232 and D234 each coordinate Mn(2+). Residue T246 participates in substrate binding.

Belongs to the arginase family. Homotrimer. The cofactor is Mn(2+). Strongest expression in liver.

It catalyses the reaction L-arginine + H2O = urea + L-ornithine. The protein operates within nitrogen metabolism; urea cycle; L-ornithine and urea from L-arginine: step 1/1. The protein is Arginase-1 (arg1) of Xenopus laevis (African clawed frog).